We begin with the raw amino-acid sequence, 265 residues long: MAKQTVIHEVGKITAKRLSDNKVIASGVTQMTQFSQQVQQDFLKGGWGNRDLYVINSSKEVSGNVRNAFFDLDFMAMQQGVKIENETISVWEDESLTVSDTGTVILSYLPLSKVSLTNEDGDQIEVDAASKTVTVPDTFATKGEALAVHYQIEVEAETVEINGEKFSENYYFEIHTIEYDPKTSKIYSDLYIQLPKVNFSGEADMSFEAGNAYTPEIGYRALADNNGKIGNFARVKRKADGTKGVVTSDEGTGSSQSSDLGGTTE.

Residues 238–265 (KADGTKGVVTSDEGTGSSQSSDLGGTTE) form a disordered region. The segment covering 249 to 265 (DEGTGSSQSSDLGGTTE) has biased composition (polar residues).

The chain is SPbeta prophage-derived uncharacterized protein YomU (yomU) from Bacillus subtilis (strain 168).